The chain runs to 290 residues: 4-hydroxy-tetrahydrodipicolinate synthase (290 aa).

Position 44 (threonine 44) interacts with pyruvate. Tyrosine 132 serves as the catalytic Proton donor/acceptor. Lysine 160 serves as the catalytic Schiff-base intermediate with substrate. Isoleucine 202 is a pyruvate binding site.

Belongs to the DapA family. In terms of assembly, homotetramer; dimer of dimers.

The protein localises to the cytoplasm. It catalyses the reaction L-aspartate 4-semialdehyde + pyruvate = (2S,4S)-4-hydroxy-2,3,4,5-tetrahydrodipicolinate + H2O + H(+). It participates in amino-acid biosynthesis; L-lysine biosynthesis via DAP pathway; (S)-tetrahydrodipicolinate from L-aspartate: step 3/4. Functionally, catalyzes the condensation of (S)-aspartate-beta-semialdehyde [(S)-ASA] and pyruvate to 4-hydroxy-tetrahydrodipicolinate (HTPA). The protein is 4-hydroxy-tetrahydrodipicolinate synthase of Alkaliphilus oremlandii (strain OhILAs) (Clostridium oremlandii (strain OhILAs)).